A 1269-amino-acid chain; its full sequence is Protein cramped-like (1269 aa).

Positions 1 to 12 (MTVKLGDGGSGE) are enriched in gly residues. A disordered region spans residues 1–165 (MTVKLGDGGS…GKKVRRQWES (165 aa)). 2 stretches are compositionally biased toward basic and acidic residues: residues 13-24 (DGLKKLGKRAAD) and 43-52 (SGTKRDEKTP). Residues 59 to 74 (PPAPPGAPQAPSPPQG) show a composition bias toward pro residues. Residues 105–123 (GNAGGSGPRGKGAEGGGSS) show a composition bias toward gly residues. Low complexity predominate over residues 124-147 (SGNVSGVAPAAPAGGSRSSSRNLG). Residues 151–165 (GEKEEGKKVRRQWES) are compositionally biased toward basic and acidic residues. One can recognise an SANT domain in the interval 161 to 224 (RQWESWSTED…FYYRTWHKIT (64 aa)). Position 307 is a phosphoserine (Ser-307). Disordered stretches follow at residues 450–541 (IQSG…PGAL), 581–666 (DTRP…EVPA), 757–827 (VRPA…NDSD), 976–1034 (EGLS…DSFQ), 1055–1092 (IPLSSSESSSTRLSPPDVSALLDISLPGPPEDALSQGE), and 1115–1157 (VPLS…PSDS). Residues 485–507 (SSGESSPESAPGEGAALSLSSPD) are compositionally biased toward low complexity. Composition is skewed to basic and acidic residues over residues 508 to 518 (APDRPPPRHQD) and 526 to 535 (TPAEGRDSPT). Composition is skewed to polar residues over residues 757 to 767 (VRPAQEEQSMT), 774 to 806 (TVSSRSPRCPRNQASLRSSKTFPPSSAPCSSGL), and 982 to 1002 (SPLSSDEVTGAISGQDSTGTH). Low complexity-rich tracts occupy residues 1055-1070 (IPLSSSESSSTRLSPP) and 1125-1140 (SDSSKSLPSPSSSPQP). Ser-1268 bears the Phosphoserine mark.

The protein belongs to the cramped family.

The protein localises to the nucleus. The chain is Protein cramped-like from Homo sapiens (Human).